The chain runs to 154 residues: Protein X (154 aa).

A disordered region spans residues 28–50 (RPLPGPLGAVPPSSPSAVPADDG). Residues 33–48 (PLGAVPPSSPSAVPAD) show a composition bias toward low complexity. The interval 68 to 117 (PCALRFTSARRMETTVNAPWSLPTVLHKRTLGLSGWSMTWIEEYIKDCVF) is mitochondrial targeting sequence.

This sequence belongs to the orthohepadnavirus protein X family. In terms of assembly, may form homodimer. May interact with host CEBPA, CFLAR, CREB1, DDB1, E4F1, HBXIP, HSPD1/HSP60, NFKBIA, POLR2E and SMAD4. Interacts with host SMC5-SMC6 complex and induces its degradation. Interacts with host TRPC4AP; leading to prevent ubiquitination of TRPC4AP. Interacts with host PLSCR1; this interaction promotes ubiquitination and degradation of HBx and impairs HBx-mediated cell proliferation. Post-translationally, a fraction may be phosphorylated in insect cells and HepG2 cells, a human hepatoblastoma cell line. Phosphorylated in vitro by host protein kinase C or mitogen-activated protein kinase. N-acetylated in insect cells.

Its subcellular location is the host cytoplasm. The protein localises to the host nucleus. It is found in the host mitochondrion. Its function is as follows. Multifunctional protein that plays a role in silencing host antiviral defenses and promoting viral transcription. Does not seem to be essential for HBV infection. May be directly involved in development of cirrhosis and liver cancer (hepatocellular carcinoma). Most of cytosolic activities involve modulation of cytosolic calcium. The effect on apoptosis is controversial depending on the cell types in which the studies have been conducted. May induce apoptosis by localizing in mitochondria and causing loss of mitochondrial membrane potential. May also modulate apoptosis by binding host CFLAR, a key regulator of the death-inducing signaling complex (DISC). Promotes viral transcription by using the host E3 ubiquitin ligase DDB1 to target the SMC5-SMC6 complex to proteasomal degradation. This host complex would otherwise bind to viral episomal DNA, and prevents its transcription. Moderately stimulates transcription of many different viral and cellular transcription elements. Promoters and enhancers stimulated by HBx contain DNA binding sites for NF-kappa-B, AP-1, AP-2, c-EBP, ATF/CREB, or the calcium-activated factor NF-AT. This chain is Protein X, found in Homo sapiens (Human).